Reading from the N-terminus, the 574-residue chain is R-linalool synthase, chloroplastic (574 aa).

A chloroplast-targeting transit peptide spans 1 to 40; it reads MSCARITVTLPYRSAKTSIQRGITHCPALLRPRFSACTPL. The span at 52–61 shows a compositional bias: polar residues; that stretch reads INGDNSPLKN. Residues 52 to 71 form a disordered region; sequence INGDNSPLKNTHQHVEERSS. Arg-287, Asp-324, Asp-328, Arg-467, and Asp-470 together coordinate (2E)-geranyl diphosphate. 2 residues coordinate Mg(2+): Asp-324 and Asp-328. The DDXXD motif motif lies at 324–328; the sequence is DDIFD. Positions 470, 474, and 478 each coordinate Mg(2+).

This sequence belongs to the terpene synthase family. Tpsb subfamily. Requires Mg(2+) as cofactor. Mn(2+) serves as cofactor.

The protein resides in the plastid. The protein localises to the chloroplast. It carries out the reaction (2E)-geranyl diphosphate + H2O = (R)-linalool + diphosphate. The protein operates within secondary metabolite biosynthesis; terpenoid biosynthesis. Its function is as follows. Monoterpene synthase that catalyzes the formation of (3R)-linalool from geranyl diphosphate. The sequence is that of R-linalool synthase, chloroplastic (LIS) from Ocimum basilicum (Sweet basil).